Consider the following 508-residue polypeptide: Putative adenosylhomocysteinase 3 (508 aa).

A Phosphoserine modification is found at serine 4. Positions 24 to 81 are disordered; sequence DQKQEFNKRPTKIGRRSLSRSISQSSTDSYSSAASYTDSSDDETSPRDKQQKNSKGSS. Residues 32–41 are compositionally biased toward basic residues; it reads RPTKIGRRSL. Residues 42 to 61 show a composition bias toward low complexity; sequence SRSISQSSTDSYSSAASYTD. Serine 46, serine 49, serine 52, and serine 55 each carry phosphoserine. Substrate-binding residues include threonine 133, aspartate 207, and glutamate 232. 233–235 contributes to the NAD(+) binding site; that stretch reads SVT. Lysine 262 and aspartate 266 together coordinate substrate. NAD(+)-binding positions include asparagine 267, 298–303, glutamate 319, asparagine 354, 375–377, and asparagine 422; these read GEVGKG and IGH.

Belongs to the adenosylhomocysteinase family. As to quaternary structure, homotetramer. Forms heteromultimers with AHCYL1 (via the C-terminal region). Interacts with ITPR1; with lower affinity than AHCYL1 and maybe via ITPR1. Interacts with SLC4A4. Interacts with ZCCHC4. The cofactor is NAD(+).

The protein resides in the cytoplasm. It localises to the microsome. It carries out the reaction S-adenosyl-L-homocysteine + H2O = L-homocysteine + adenosine. It functions in the pathway amino-acid biosynthesis; L-homocysteine biosynthesis; L-homocysteine from S-adenosyl-L-homocysteine: step 1/1. Its function is as follows. May regulate the electrogenic sodium/bicarbonate cotransporter SLC4A4 activity and Mg(2+)-sensitivity. On the contrary of its homolog AHCYL1, does not regulate ITPR1 sensitivity to inositol 1,4,5-trisphosphate. This Pongo abelii (Sumatran orangutan) protein is Putative adenosylhomocysteinase 3 (AHCYL2).